A 338-amino-acid polypeptide reads, in one-letter code: Extracellular globin (338 aa).

The first 18 residues, 1–18 (MRSLLLLSIVFFVVTVSA), serve as a signal peptide directing secretion. N-linked (GlcNAc...) asparagine glycosylation occurs at Asn19. Globin domains lie at 25-167 (CMKS…KHGR) and 174-316 (CMRS…RHGK). Residues Gln82 and His114 each contribute to the heme b site. Residue Asn216 is glycosylated (N-linked (GlcNAc...) asparagine). 2 residues coordinate heme b: Gln231 and His263. The interval 313–338 (RHGKEHHEHKEEHKEEHKEEHKEEQH) is disordered.

The protein belongs to the globin family. Homooctamer.

It localises to the secreted. The protein localises to the extracellular space. Its function is as follows. Has an extremely high oxygen affinity. In a vacuum, it takes several minutes to release its oxygen compared to milliseconds for a normal globin. Could be used as an oxygen scavenger for sterol biosynthesis. This chain is Extracellular globin, found in Ascaris suum (Pig roundworm).